The primary structure comprises 407 residues: Peptidase T (407 aa).

Histidine 82 serves as a coordination point for Zn(2+). The active site involves aspartate 84. Zn(2+) is bound at residue aspartate 143. Glutamate 177 acts as the Proton acceptor in catalysis. 3 residues coordinate Zn(2+): glutamate 178, aspartate 200, and histidine 382.

Belongs to the peptidase M20B family. Zn(2+) is required as a cofactor.

It is found in the cytoplasm. The enzyme catalyses Release of the N-terminal residue from a tripeptide.. Its function is as follows. Cleaves the N-terminal amino acid of tripeptides. The sequence is that of Peptidase T from Streptococcus pyogenes serotype M6 (strain ATCC BAA-946 / MGAS10394).